A 186-amino-acid chain; its full sequence is ATP synthase subunit delta (186 aa).

The protein belongs to the ATPase delta chain family. F-type ATPases have 2 components, F(1) - the catalytic core - and F(0) - the membrane proton channel. F(1) has five subunits: alpha(3), beta(3), gamma(1), delta(1), epsilon(1). CF(0) has four main subunits: a(1), b(1), b'(1) and c(10-14). The alpha and beta chains form an alternating ring which encloses part of the gamma chain. F(1) is attached to F(0) by a central stalk formed by the gamma and epsilon chains, while a peripheral stalk is formed by the delta, b and b' chains.

The protein resides in the cell inner membrane. In terms of biological role, f(1)F(0) ATP synthase produces ATP from ADP in the presence of a proton or sodium gradient. F-type ATPases consist of two structural domains, F(1) containing the extramembraneous catalytic core and F(0) containing the membrane proton channel, linked together by a central stalk and a peripheral stalk. During catalysis, ATP synthesis in the catalytic domain of F(1) is coupled via a rotary mechanism of the central stalk subunits to proton translocation. This protein is part of the stalk that links CF(0) to CF(1). It either transmits conformational changes from CF(0) to CF(1) or is implicated in proton conduction. This chain is ATP synthase subunit delta, found in Rhodopseudomonas palustris (strain HaA2).